Here is a 126-residue protein sequence, read N- to C-terminus: uncharacterized protein (126 aa).

The next 2 membrane-spanning stretches (helical) occupy residues 40–57 (IDKW…VSFF) and 72–94 (ILIA…ILGG).

It is found in the cell membrane. This is an uncharacterized protein from Pasteurella multocida (strain Pm70).